We begin with the raw amino-acid sequence, 149 residues long: UPF0178 protein VV1_1847 (149 aa).

Belongs to the UPF0178 family.

The protein is UPF0178 protein VV1_1847 of Vibrio vulnificus (strain CMCP6).